A 713-amino-acid polypeptide reads, in one-letter code: Methionine--tRNA ligase (713 aa).

The short motif at 17–27 is the 'HIGH' region element; it reads PYANGPIHIGH. Zn(2+)-binding residues include C149, C152, C162, and C165. Residues 345-349 carry the 'KMSKS' region motif; sequence KLSTS. T348 lines the ATP pocket. Residues 530–564 are disordered; that stretch reads VRTSTPDDDPAGAVGWEDAGAPLLPAGHPIPSGPD. Positions 614-713 constitute a tRNA-binding domain; sequence DFTQLDLRAG…TEAEDGSVVR (100 aa).

Belongs to the class-I aminoacyl-tRNA synthetase family. MetG type 1 subfamily. Homodimer. The cofactor is Zn(2+).

Its subcellular location is the cytoplasm. The enzyme catalyses tRNA(Met) + L-methionine + ATP = L-methionyl-tRNA(Met) + AMP + diphosphate. In terms of biological role, is required not only for elongation of protein synthesis but also for the initiation of all mRNA translation through initiator tRNA(fMet) aminoacylation. This is Methionine--tRNA ligase from Salinibacter ruber (strain DSM 13855 / M31).